The sequence spans 130 residues: Fluoride-specific ion channel FluC (130 aa).

4 helical membrane passes run 2–22 (GLLL…RFAL), 36–56 (GILL…AFLI), 71–91 (FLLV…SLDI), and 100–120 (IFIA…AVIL). Glycine 79 and threonine 82 together coordinate Na(+).

The protein belongs to the fluoride channel Fluc/FEX (TC 1.A.43) family.

Its subcellular location is the cell inner membrane. It catalyses the reaction fluoride(in) = fluoride(out). With respect to regulation, na(+) is not transported, but it plays an essential structural role and its presence is essential for fluoride channel function. Fluoride-specific ion channel. Important for reducing fluoride concentration in the cell, thus reducing its toxicity. In Francisella tularensis subsp. tularensis (strain FSC 198), this protein is Fluoride-specific ion channel FluC.